Reading from the N-terminus, the 702-residue chain is DNA ligase (702 aa).

Residues 32-36 (DAEYD) and 81-82 (SL) contribute to the NAD(+) site. A disordered region spans residues 104 to 125 (AESSAQKASLNPLVRDSDQKNR). Glu139 is a binding site for NAD(+). The active-site N6-AMP-lysine intermediate is the Lys141. The NAD(+) site is built by Arg162, Glu199, Lys316, and Lys340. Zn(2+) contacts are provided by Cys434, Cys437, Cys452, and Cys458. The BRCT domain maps to 616–702 (KPNHPFRDKT…KALKPEGTKV (87 aa)).

The protein belongs to the NAD-dependent DNA ligase family. LigA subfamily. Requires Mg(2+) as cofactor. The cofactor is Mn(2+).

It carries out the reaction NAD(+) + (deoxyribonucleotide)n-3'-hydroxyl + 5'-phospho-(deoxyribonucleotide)m = (deoxyribonucleotide)n+m + AMP + beta-nicotinamide D-nucleotide.. DNA ligase that catalyzes the formation of phosphodiester linkages between 5'-phosphoryl and 3'-hydroxyl groups in double-stranded DNA using NAD as a coenzyme and as the energy source for the reaction. It is essential for DNA replication and repair of damaged DNA. The sequence is that of DNA ligase from Hamiltonella defensa subsp. Acyrthosiphon pisum (strain 5AT).